The chain runs to 156 residues: MRSSAKQEELVRAFKALLKEEKFSSQGEIVVALQEQGFDNINQSKVSRMLTKFGAVRTRNAKMEMVYCLPAELGVPTTSSPLKNLVLDIDYNDAVVVIHTSPGAAQLIARLLDSLGKAEGILGTIAGDDTIFTTPASGFSVKELYEAILELFEQEL.

It belongs to the ArgR family.

Its subcellular location is the cytoplasm. It participates in amino-acid biosynthesis; L-arginine biosynthesis [regulation]. Functionally, regulates arginine biosynthesis genes. This is Arginine repressor from Escherichia fergusonii (strain ATCC 35469 / DSM 13698 / CCUG 18766 / IAM 14443 / JCM 21226 / LMG 7866 / NBRC 102419 / NCTC 12128 / CDC 0568-73).